We begin with the raw amino-acid sequence, 194 residues long: Protein GrpE (194 aa).

Over residues 1-14 the composition is skewed to basic and acidic residues; it reads MSKMNPNEKKENAS. The interval 1 to 48 is disordered; the sequence is MSKMNPNEKKENASKNENVNNEEATNLQEEQSNAADEAAGSDNVSGEV. Polar residues predominate over residues 24–34; sequence ATNLQEEQSNA.

This sequence belongs to the GrpE family. In terms of assembly, homodimer.

The protein localises to the cytoplasm. Its function is as follows. Participates actively in the response to hyperosmotic and heat shock by preventing the aggregation of stress-denatured proteins, in association with DnaK and GrpE. It is the nucleotide exchange factor for DnaK and may function as a thermosensor. Unfolded proteins bind initially to DnaJ; upon interaction with the DnaJ-bound protein, DnaK hydrolyzes its bound ATP, resulting in the formation of a stable complex. GrpE releases ADP from DnaK; ATP binding to DnaK triggers the release of the substrate protein, thus completing the reaction cycle. Several rounds of ATP-dependent interactions between DnaJ, DnaK and GrpE are required for fully efficient folding. This chain is Protein GrpE, found in Parabacteroides distasonis (strain ATCC 8503 / DSM 20701 / CIP 104284 / JCM 5825 / NCTC 11152).